A 232-amino-acid chain; its full sequence is Large ribosomal subunit protein uL1 (232 aa).

It belongs to the universal ribosomal protein uL1 family. As to quaternary structure, part of the 50S ribosomal subunit.

In terms of biological role, binds directly to 23S rRNA. The L1 stalk is quite mobile in the ribosome, and is involved in E site tRNA release. Functionally, protein L1 is also a translational repressor protein, it controls the translation of the L11 operon by binding to its mRNA. The chain is Large ribosomal subunit protein uL1 from Chlamydia trachomatis serovar L2 (strain ATCC VR-902B / DSM 19102 / 434/Bu).